The chain runs to 359 residues: uncharacterized protein (359 aa).

A run of 6 helical transmembrane segments spans residues 4–24, 36–56, 68–88, 94–114, 129–149, and 155–175; these read ELFV…HLFK, FQAV…VFGF, IPIM…ALAM, LLIT…IAAI, HAFY…YFLI, and ELHL…LYII. Residues 223-357 enclose the GGDEF domain; it reads FQFALIYMDI…GRNRVCFSEK (135 aa).

It localises to the cell membrane. This is an uncharacterized protein from Bacillus subtilis (strain 168).